Consider the following 148-residue polypeptide: 3-dehydroquinate dehydratase (148 aa).

Catalysis depends on Y23, which acts as the Proton acceptor. Residues N74, H80, and D87 each contribute to the substrate site. H100 acts as the Proton donor in catalysis. Residues 101–102 and R111 each bind substrate; that span reads IS.

The protein belongs to the type-II 3-dehydroquinase family. In terms of assembly, homododecamer.

The enzyme catalyses 3-dehydroquinate = 3-dehydroshikimate + H2O. It participates in metabolic intermediate biosynthesis; chorismate biosynthesis; chorismate from D-erythrose 4-phosphate and phosphoenolpyruvate: step 3/7. Functionally, catalyzes a trans-dehydration via an enolate intermediate. This chain is 3-dehydroquinate dehydratase, found in Halothermothrix orenii (strain H 168 / OCM 544 / DSM 9562).